The sequence spans 213 residues: Thymidylate kinase (213 aa).

Position 11-18 (11-18 (GPDGAGKT)) interacts with ATP.

The protein belongs to the thymidylate kinase family.

The enzyme catalyses dTMP + ATP = dTDP + ADP. In terms of biological role, phosphorylation of dTMP to form dTDP in both de novo and salvage pathways of dTTP synthesis. This chain is Thymidylate kinase, found in Oenococcus oeni (strain ATCC BAA-331 / PSU-1).